The chain runs to 424 residues: tRNA(Met) cytidine acetate ligase (424 aa).

ATP is bound by residues 7 to 20 (ITEY…HLHH), Gly102, Asn174, and Arg199.

It belongs to the TmcAL family.

It localises to the cytoplasm. The catalysed reaction is cytidine(34) in elongator tRNA(Met) + acetate + ATP = N(4)-acetylcytidine(34) in elongator tRNA(Met) + AMP + diphosphate. Catalyzes the formation of N(4)-acetylcytidine (ac(4)C) at the wobble position of elongator tRNA(Met), using acetate and ATP as substrates. First activates an acetate ion to form acetyladenylate (Ac-AMP) and then transfers the acetyl group to tRNA to form ac(4)C34. The protein is tRNA(Met) cytidine acetate ligase of Alkaliphilus metalliredigens (strain QYMF).